A 126-amino-acid polypeptide reads, in one-letter code: MKMLVFPVLAALFAVGLGNLVGAPRDINISEAQDALDFAVAKHNSGTNDMFLRQVAEVVRVQRQVVSGNKYIITVKMAKTPCRKDRVVNEVCEIHKDPALAQPYECTFSVWSRPWIPDLQLVGEKC.

An N-terminal signal peptide occupies residues 1 to 18; the sequence is MKMLVFPVLAALFAVGLG. Residues 22-115 enclose the Cystatin domain; the sequence is GAPRDINISE…CTFSVWSRPW (94 aa). A Secondary area of contact motif is present at residues 64-68; that stretch reads QVVSG. 2 disulfides stabilise this stretch: Cys-82–Cys-92 and Cys-106–Cys-126.

It belongs to the cystatin family. In terms of tissue distribution, ubiquitously expressed in normal tissues including brain, eye, gill, heart, gullet, liver, spleen, stomach, pyloric ceca, intestine, kidney and muscle. Expressed, but not up-regulated, in lipopolysaccharide (LPS)-stimulated tissues including kidney, spleen, muscle and gill.

It is found in the secreted. Its function is as follows. Thiol protease inhibitor. Has high papain inhibitory activity and inhibits to a lesser extent fish cathepsins L, S, K, F, X and bovine cathepsin B in vitro. The protein is Cystatin-C of Paralichthys olivaceus (Bastard halibut).